The primary structure comprises 146 residues: Cyanate hydratase (146 aa).

Catalysis depends on residues R87, E90, and S113.

This sequence belongs to the cyanase family.

It catalyses the reaction cyanate + hydrogencarbonate + 3 H(+) = NH4(+) + 2 CO2. Catalyzes the reaction of cyanate with bicarbonate to produce ammonia and carbon dioxide. In Synechococcus elongatus (strain ATCC 33912 / PCC 7942 / FACHB-805) (Anacystis nidulans R2), this protein is Cyanate hydratase.